The sequence spans 296 residues: Ribosomal RNA small subunit methyltransferase H (296 aa).

Residues 38-40 (GAH), Glu57, Phe88, Asp103, and His110 contribute to the S-adenosyl-L-methionine site.

Belongs to the methyltransferase superfamily. RsmH family.

The protein localises to the cytoplasm. The catalysed reaction is cytidine(1402) in 16S rRNA + S-adenosyl-L-methionine = N(4)-methylcytidine(1402) in 16S rRNA + S-adenosyl-L-homocysteine + H(+). In terms of biological role, specifically methylates the N4 position of cytidine in position 1402 (C1402) of 16S rRNA. This is Ribosomal RNA small subunit methyltransferase H from Borreliella afzelii (strain PKo) (Borrelia afzelii).